The following is a 309-amino-acid chain: tRNA pseudouridine synthase B (309 aa).

Catalysis depends on Asp39, which acts as the Nucleophile.

This sequence belongs to the pseudouridine synthase TruB family. Type 1 subfamily.

It carries out the reaction uridine(55) in tRNA = pseudouridine(55) in tRNA. Responsible for synthesis of pseudouridine from uracil-55 in the psi GC loop of transfer RNAs. This Bacillus pumilus (strain SAFR-032) protein is tRNA pseudouridine synthase B.